A 211-amino-acid chain; its full sequence is Thiamine-phosphate synthase (211 aa).

Residues 37–41 (QLRIK) and Asn-69 contribute to the 4-amino-2-methyl-5-(diphosphooxymethyl)pyrimidine site. Mg(2+)-binding residues include Asp-70 and Asp-89. A 4-amino-2-methyl-5-(diphosphooxymethyl)pyrimidine-binding site is contributed by Ser-108. 134 to 136 (TQT) is a binding site for 2-[(2R,5Z)-2-carboxy-4-methylthiazol-5(2H)-ylidene]ethyl phosphate. Lys-137 is a 4-amino-2-methyl-5-(diphosphooxymethyl)pyrimidine binding site. 2-[(2R,5Z)-2-carboxy-4-methylthiazol-5(2H)-ylidene]ethyl phosphate-binding positions include Gly-166 and 186–187 (VS).

Belongs to the thiamine-phosphate synthase family. It depends on Mg(2+) as a cofactor.

It carries out the reaction 2-[(2R,5Z)-2-carboxy-4-methylthiazol-5(2H)-ylidene]ethyl phosphate + 4-amino-2-methyl-5-(diphosphooxymethyl)pyrimidine + 2 H(+) = thiamine phosphate + CO2 + diphosphate. It catalyses the reaction 2-(2-carboxy-4-methylthiazol-5-yl)ethyl phosphate + 4-amino-2-methyl-5-(diphosphooxymethyl)pyrimidine + 2 H(+) = thiamine phosphate + CO2 + diphosphate. The enzyme catalyses 4-methyl-5-(2-phosphooxyethyl)-thiazole + 4-amino-2-methyl-5-(diphosphooxymethyl)pyrimidine + H(+) = thiamine phosphate + diphosphate. Its pathway is cofactor biosynthesis; thiamine diphosphate biosynthesis; thiamine phosphate from 4-amino-2-methyl-5-diphosphomethylpyrimidine and 4-methyl-5-(2-phosphoethyl)-thiazole: step 1/1. Condenses 4-methyl-5-(beta-hydroxyethyl)thiazole monophosphate (THZ-P) and 2-methyl-4-amino-5-hydroxymethyl pyrimidine pyrophosphate (HMP-PP) to form thiamine monophosphate (TMP). The protein is Thiamine-phosphate synthase of Escherichia coli O157:H7.